The following is a 522-amino-acid chain: Putative zinc finger protein 286B (522 aa).

The tract at residues Met-1–Gly-30 is disordered. 10 consecutive C2H2-type zinc fingers follow at residues His-244 to His-266, Tyr-272 to His-294, Phe-299 to His-321, Tyr-327 to His-349, Tyr-355 to His-377, Tyr-383 to His-405, Tyr-411 to His-433, Tyr-439 to His-461, Tyr-467 to His-489, and Phe-495 to His-517.

This sequence belongs to the krueppel C2H2-type zinc-finger protein family.

It is found in the nucleus. Its function is as follows. May be involved in transcriptional regulation. The sequence is that of Putative zinc finger protein 286B (ZNF286B) from Homo sapiens (Human).